The following is a 547-amino-acid chain: uncharacterized protein (547 aa).

A disordered region spans residues 1–37; that stretch reads MSAASSAIPKRSDPRLLDQKKSAKSTLPKNTPENGVS. Positions 10–21 are enriched in basic and acidic residues; it reads KRSDPRLLDQKK. Positions 24 to 37 are enriched in polar residues; sequence KSTLPKNTPENGVS. 2 consecutive C3H1-type zinc fingers follow at residues 41-67 and 68-95; these read NLQHVPCKFFRNGTCTAGENCPFSHSL and ETERPICKYFLKGNCKFGPKCALSHALP. Residues 132-176 form a disordered region; that stretch reads SPSLSSKTMKNPADKANNTTATDVRGNTATSPYFPFSRSPGRHSG. The segment covering 147–162 has biased composition (polar residues); the sequence is ANNTTATDVRGNTATS. Residue S343 is modified to Phosphoserine. Position 344 is a phosphotyrosine (Y344). Phosphoserine is present on residues S353, S355, S483, S489, S495, and S499. T502 carries the post-translational modification Phosphothreonine. Positions 526 to 536 are enriched in polar residues; sequence VANSSPPWNST. The interval 526-547 is disordered; that stretch reads VANSSPPWNSTVEEETPFQMDD. Residues 537 to 547 are compositionally biased toward acidic residues; the sequence is VEEETPFQMDD.

This is an uncharacterized protein from Schizosaccharomyces pombe (strain 972 / ATCC 24843) (Fission yeast).